The chain runs to 1216 residues: Protein WWC3 (1216 aa).

The disordered stretch occupies residues 1–63 (MPWLSGGRRR…RESAELPLPA (63 aa)). Pro residues predominate over residues 21-51 (EPPPSAQPQREPPPAPPAAVPTPPAPSAPPP). 2 WW domains span residues 59–92 (LPLPAGWEEARDYDGRVFYIDHNTRQTSWIDPRD) and 106–139 (DELPLGWETVYDKQIGVYYMDHINKLTQIEDPRE). Coiled coils occupy residues 164-250 (KEIY…TLQE) and 354-468 (DRVR…EATR). 3 disordered regions span residues 487-508 (VSSGSSRGSLASSRGSLASSRG), 546-612 (GRDA…ADSC), and 634-668 (DLPGMAALQPHGVPGDGEGPHERGPPPASAPVGGT). Residues 570–598 (PQSLASLSSRSSLSSLSPPSSPLDTPFLP) show a composition bias toward low complexity. Residues 722–847 (SNGDPQIHVG…SLSEMQLRWH (126 aa)) enclose the C2 domain. The stretch at 885 to 936 (DAVTVLLARTTAQLQAVERELAEERAKLEYTEEEVLEMERKEEQAEAISERS) forms a coiled coil. The interaction with PRKCZ stretch occupies residues 1060-1079 (SPFVRNTLERRTLRYKQSCR). The stretch at 1091–1160 (LDLELDLQAS…RQTRQTKLDY (70 aa)) forms a coiled coil.

The protein belongs to the WWC family. As to quaternary structure, forms homodimers and heterodimers with WWC1 and WWC2. Interacts with DLC1 and PRKCZ. Interacts (via WW domains) with LATS1 and LATS2.

The protein localises to the cytoplasm. The protein resides in the cytosol. In terms of biological role, regulator of the Hippo signaling pathway, also known as the Salvador-Warts-Hippo (SWH) pathway. Enhances phosphorylation of LATS1 and YAP1 and negatively regulates cell proliferation and organ growth due to a suppression of the transcriptional activity of YAP1, the major effector of the Hippo pathway. The protein is Protein WWC3 of Homo sapiens (Human).